The following is an 840-amino-acid chain: V-type proton ATPase subunit a, vacuolar isoform (840 aa).

Position 2 is an N-acetylalanine (Ala2). Residues 2–404 (AEKEEAIFRS…DCYGIAQYRE (403 aa)) are Cytoplasmic-facing. Positions 117-145 (LEERLIQMEDATDQIEVQKNDLEQYRFIL) form a coiled coil. A helical membrane pass occupies residues 405 to 423 (INAGLPTIVTFPFMFAIMF). Residues 424 to 425 (GD) are Vacuolar-facing. The chain crosses the membrane as a helical span at residues 426-442 (MGHGFLMTLAALSLVLN). Residues 443–456 (EKKINKMKRGEIFD) lie on the Cytoplasmic side of the membrane. The helical transmembrane segment at 457 to 486 (MAFTGRYIILLMGVFSMYTGFLYNDIFSKT) threads the bilayer. The Vacuolar portion of the chain corresponds to 487–534 (MTIFKSGWKWPDHWKKGESITATSVGTYPIGLDWAWHGTENALLFSNS). Residues 535–554 (YKMKLSILMGFIHMTYSYFF) form a helical membrane-spanning segment. Residues 555–572 (SLANHLYFNSMIDIIGNF) are Cytoplasmic-facing. A helical transmembrane segment spans residues 573–593 (IPGLLFMQGIFGYLSVCIVYK). Residues 594–636 (WAVDWVKDGKPAPGLLNMLINMFLSPGTIDDELYPHQAKVQVF) are Vacuolar-facing. A helical membrane pass occupies residues 637 to 656 (LLLMALVCIPWLLLVKPLHF). Residues 657-719 (KFTHKKKSHE…DIMIHQVIHT (63 aa)) are Cytoplasmic-facing. Residues 720-744 (IEFCLNCVSHTASYLRLWALSLAHA) form a helical membrane-spanning segment. Topologically, residues 745–765 (QLSSVLWTMTIQIAFGFRGFV) are vacuolar. The chain crosses the membrane as a helical span at residues 766 to 804 (GVFMTVALFAMWFALTCAVLVLMEGTSAMLHSLRLHWVE). The Cytoplasmic segment spans residues 805–840 (SMSKFFVGEGLPYEPFAFEYKDMEVAVASASSSASS).

It belongs to the V-ATPase 116 kDa subunit family. In terms of assembly, V-ATPase is a heteromultimeric enzyme composed of a peripheral catalytic V1 complex (components A to H) attached to an integral membrane V0 proton pore complex (components: a, c, c', c'', d, e, f and VOA1). In terms of processing, glycosylated.

The protein resides in the vacuole membrane. In terms of biological role, subunit of the V0 complex of vacuolar(H+)-ATPase (V-ATPase), a multisubunit enzyme composed of a peripheral complex (V1) that hydrolyzes ATP and a membrane integral complex (V0) that translocates protons. V-ATPase is responsible for acidifying and maintaining the pH of intracellular compartments. Is present only in vacuolar V-ATPase complexes; enzymes containing this subunit have a 4-fold higher ratio of proton transport to ATP hydrolysis than complexes containing the Golgi/endosomal isoform and undergo reversible dissociation of V1 and V0 in response to glucose depletion. In Saccharomyces cerevisiae (strain ATCC 204508 / S288c) (Baker's yeast), this protein is V-type proton ATPase subunit a, vacuolar isoform.